Consider the following 183-residue polypeptide: Putative 3-methyladenine DNA glycosylase (183 aa).

The protein belongs to the DNA glycosylase MPG family.

The polypeptide is Putative 3-methyladenine DNA glycosylase (Rickettsia rickettsii (strain Iowa)).